The chain runs to 181 residues: Oligoribonuclease (181 aa).

The 164-residue stretch at L8–L171 folds into the Exonuclease domain. Y129 is a catalytic residue.

Belongs to the oligoribonuclease family.

It is found in the cytoplasm. 3'-to-5' exoribonuclease specific for small oligoribonucleotides. The polypeptide is Oligoribonuclease (Sodalis glossinidius (strain morsitans)).